A 405-amino-acid chain; its full sequence is Argininosuccinate synthase (405 aa).

9-17 contributes to the ATP binding site; that stretch reads AYSGGLDTS. Y87 and S92 together coordinate L-citrulline. G117 is an ATP binding site. T119, N123, and D124 together coordinate L-aspartate. L-citrulline is bound at residue N123. The L-citrulline site is built by R127, S176, S185, E262, and Y274.

The protein belongs to the argininosuccinate synthase family. Type 1 subfamily. In terms of assembly, homotetramer.

It localises to the cytoplasm. The catalysed reaction is L-citrulline + L-aspartate + ATP = 2-(N(omega)-L-arginino)succinate + AMP + diphosphate + H(+). The protein operates within amino-acid biosynthesis; L-arginine biosynthesis; L-arginine from L-ornithine and carbamoyl phosphate: step 2/3. This is Argininosuccinate synthase from Caldicellulosiruptor saccharolyticus (strain ATCC 43494 / DSM 8903 / Tp8T 6331).